The sequence spans 278 residues: HTH-type transcriptional regulator HdfR (278 aa).

The 58-residue stretch at 1 to 58 folds into the HTH lysR-type domain; sequence MDTELLKTFLEVSRTRHFGRAAEALYLTQSAVSFRIRQLENQLGVNLFTRHRNNIRLT. Positions 18-37 form a DNA-binding region, H-T-H motif; the sequence is FGRAAEALYLTQSAVSFRIR.

This sequence belongs to the LysR transcriptional regulatory family.

In terms of biological role, negatively regulates the transcription of the flagellar master operon flhDC by binding to the upstream region of the operon. The sequence is that of HTH-type transcriptional regulator HdfR from Salmonella dublin (strain CT_02021853).